Consider the following 933-residue polypeptide: Isoleucine--tRNA ligase (933 aa).

The 'HIGH' region signature appears at 57-67 (PYANGNIHVGH). Residue Glu554 coordinates L-isoleucyl-5'-AMP. A 'KMSKS' region motif is present at residues 595–599 (KMSKS). Lys598 provides a ligand contact to ATP.

The protein belongs to the class-I aminoacyl-tRNA synthetase family. IleS type 1 subfamily. Monomer.

It localises to the cytoplasm. The enzyme catalyses tRNA(Ile) + L-isoleucine + ATP = L-isoleucyl-tRNA(Ile) + AMP + diphosphate. In terms of biological role, catalyzes the attachment of isoleucine to tRNA(Ile). As IleRS can inadvertently accommodate and process structurally similar amino acids such as valine, to avoid such errors it has two additional distinct tRNA(Ile)-dependent editing activities. One activity is designated as 'pretransfer' editing and involves the hydrolysis of activated Val-AMP. The other activity is designated 'posttransfer' editing and involves deacylation of mischarged Val-tRNA(Ile). The chain is Isoleucine--tRNA ligase from Streptococcus pyogenes serotype M6 (strain ATCC BAA-946 / MGAS10394).